The chain runs to 225 residues: NAD(P)H-quinone oxidoreductase subunit K, chloroplastic (225 aa).

[4Fe-4S] cluster contacts are provided by Cys43, Cys44, Cys108, and Cys139.

Belongs to the complex I 20 kDa subunit family. As to quaternary structure, NDH is composed of at least 16 different subunits, 5 of which are encoded in the nucleus. The cofactor is [4Fe-4S] cluster.

Its subcellular location is the plastid. It localises to the chloroplast thylakoid membrane. The catalysed reaction is a plastoquinone + NADH + (n+1) H(+)(in) = a plastoquinol + NAD(+) + n H(+)(out). The enzyme catalyses a plastoquinone + NADPH + (n+1) H(+)(in) = a plastoquinol + NADP(+) + n H(+)(out). NDH shuttles electrons from NAD(P)H:plastoquinone, via FMN and iron-sulfur (Fe-S) centers, to quinones in the photosynthetic chain and possibly in a chloroplast respiratory chain. The immediate electron acceptor for the enzyme in this species is believed to be plastoquinone. Couples the redox reaction to proton translocation, and thus conserves the redox energy in a proton gradient. This is NAD(P)H-quinone oxidoreductase subunit K, chloroplastic from Solanum bulbocastanum (Wild potato).